The primary structure comprises 180 residues: MFEATTILGYRGEMGGKKFALIGGDGQVTLGNCVVKANATKIRSLYHNQVLSGFAGSTADAFSLFDMFERILESKKGDLFKSVVDFSKEWRKDKYLRRLEAMMIVLNLDHIFILSGTGDVLEAEDNKIAAIGSGGNYALSAARALDHFAHLEPRKLVEESLKIAGDLCIYTNTNIKILEL.

T5 is an active-site residue. Positions 165, 168, and 171 each coordinate Na(+).

It belongs to the peptidase T1B family. HslV subfamily. A double ring-shaped homohexamer of HslV is capped on each side by a ring-shaped HslU homohexamer. The assembly of the HslU/HslV complex is dependent on binding of ATP.

It is found in the cytoplasm. The catalysed reaction is ATP-dependent cleavage of peptide bonds with broad specificity.. Its activity is regulated as follows. Allosterically activated by HslU binding. In terms of biological role, protease subunit of a proteasome-like degradation complex believed to be a general protein degrading machinery. This Helicobacter pylori (strain HPAG1) protein is ATP-dependent protease subunit HslV.